A 313-amino-acid polypeptide reads, in one-letter code: 3'-5' exoribonuclease YhaM (313 aa).

Positions histidine 163–serine 279 constitute an HD domain.

This sequence belongs to the YhaM family.

Functionally, shows a 3'-5' exoribonuclease activity. The sequence is that of 3'-5' exoribonuclease YhaM from Listeria welshimeri serovar 6b (strain ATCC 35897 / DSM 20650 / CCUG 15529 / CIP 8149 / NCTC 11857 / SLCC 5334 / V8).